A 360-amino-acid polypeptide reads, in one-letter code: Peptide chain release factor 1 (360 aa).

Gln-235 is subject to N5-methylglutamine. Positions 283–293 (EREAQAKEASA) are enriched in basic and acidic residues. The segment at 283 to 305 (EREAQAKEASARKSLIGSGDRSD) is disordered.

It belongs to the prokaryotic/mitochondrial release factor family. In terms of processing, methylated by PrmC. Methylation increases the termination efficiency of RF1.

The protein resides in the cytoplasm. Its function is as follows. Peptide chain release factor 1 directs the termination of translation in response to the peptide chain termination codons UAG and UAA. This Ralstonia pickettii (strain 12J) protein is Peptide chain release factor 1.